The chain runs to 122 residues: MLQELSVAKVADNSGAKEVGIIRNLGGSVKKSSNIGDVVICSVKKAIPNGIVKKGQVVKAVIVRTKYGIKRENGQHVSFDDNAVVIIKEDKSPRGTRVFGPVARELREKGYLKIVSLAPEVL.

It belongs to the universal ribosomal protein uL14 family. As to quaternary structure, part of the 50S ribosomal subunit. Forms a cluster with proteins L3 and L19. In the 70S ribosome, L14 and L19 interact and together make contacts with the 16S rRNA in bridges B5 and B8.

In terms of biological role, binds to 23S rRNA. Forms part of two intersubunit bridges in the 70S ribosome. This Mycoplasmopsis pulmonis (strain UAB CTIP) (Mycoplasma pulmonis) protein is Large ribosomal subunit protein uL14.